A 106-amino-acid polypeptide reads, in one-letter code: V-type proton ATPase subunit G2 (106 aa).

Residue Met1 is modified to N-acetylmethionine. Positions 31–67 (LKQAKEEAETEVAEHKTSTEQGFQRKLEATSGDSGAN) are disordered. Positions 33–58 (QAKEEAETEVAEHKTSTEQGFQRKLE) are enriched in basic and acidic residues.

Belongs to the V-ATPase G subunit family. V-ATPase is a heteromultimeric enzyme composed of a peripheral catalytic V1 complex (components A to H) attached to an integral membrane V0 proton pore complex (components: a, c, c'', d and e).

The protein resides in the vacuole membrane. In terms of biological role, catalytic subunit of the peripheral V1 complex of vacuolar ATPase (V-ATPase). V-ATPase is responsible for acidifying a variety of intracellular compartments in eukaryotic cells. The sequence is that of V-type proton ATPase subunit G2 (VHA-G2) from Arabidopsis thaliana (Mouse-ear cress).